A 1159-amino-acid polypeptide reads, in one-letter code: MKVTKVGGISHKKYTSEGRLVKSESEENRTDERLSALLNMRLDMYIKNPSSTETKENQKRIGKLKKFFSNKMVYLKDNTLSLKNGKKENIDREYSETDILESDVRDKKNFAVLKKIYLNENVNSEELEVFRNDIKKKLNKINSLKYSFEKNKANYQKINENNIEKVEGKSKRNIIYDYYRESAKRDAYVSNVKEAFDKLYKEEDIAKLVLEIENLTKLEKYKIREFYHEIIGRKNDKENFAKIIYEEIQNVNNMKELIEKVPDMSELKKSQVFYKYYLDKEELNDKNIKYAFCHFVEIEMSQLLKNYVYKRLSNISNDKIKRIFEYQNLKKLIENKLLNKLDTYVRNCGKYNYYLQDGEIATSDFIARNRQNEAFLRNIIGVSSVAYFSLRNILETENENDITGRMRGKTVKNNKGEEKYVSGEVDKIYNENKKNEVKENLKMFYSYDFNMDNKNEIEDFFANIDEAISSIRHGIVHFNLELEGKDIFAFKNIAPSEISKKMFQNEINEKKLKLKIFRQLNSANVFRYLEKYKILNYLKRTRFEFVNKNIPFVPSFTKLYSRIDDLKNSLGIYWKTPKTNDDNKTKEIIDAQIYLLKNIYYGEFLNYFMSNNGNFFEISKEIIELNKNDKRNLKTGFYKLQKFEDIQEKIPKEYLANIQSLYMINAGNQDEEEKDTYIDFIQKIFLKGFMTYLANNGRLSLIYIGSDEETNTSLAEKKQEFDKFLKKYEQNNNIKIPYEINEFLREIKLGNILKYTERLNMFYLILKLLNHKELTNLKGSLEKYQSANKEEAFSDQLELINLLNLDNNRVTEDFELEADEIGKFLDFNGNKVKDNKELKKFDTNKIYFDGENIIKHRAFYNIKKYGMLNLLEKIADKAGYKISIEELKKYSNKKNEIEKNHKMQENLHRKYARPRKDEKFTDEDYESYKQAIENIEEYTHLKNKVEFNELNLLQGLLLRILHRLVGYTSIWERDLRFRLKGEFPENQYIEEIFNFENKKNVKYKGGQIVEKYIKFYKELHQNDEVKINKYSSANIKVLKQEKKDLYIRNYIAHFNYIPHAEISLLEVLENLRKLLSYDRKLKNAVMKSVVDILKEYGFVATFKIGADKKIGIQTLESEKIVHLKNLKKKKLMTDRNSEELCKLVKIMFEYKMEEKKSEN.

Residues 1–11 (MKVTKVGGISH) are binds crRNA repeat and spacer. Positions 1–170 (MKVTKVGGIS…NNIEKVEGKS (170 aa)) are NTD. 6 binds crRNA repeat regions span residues 139-151 (NKIN…FEKN), 172-176 (RNIIY), 224-233 (REFYHEIIGR), 271-276 (QVFYKY), 294-297 (HFVE), and 301-305 (SQLLK). Positions 171–360 (KRNIIYDYYR…YNYYLQDGEI (190 aa)) are helical-1. Residues 319 to 328 (KIKRIFEYQN) are binds crRNA processing site. Binds crRNA repeat stretches follow at residues 336-340 (KLLNK) and 371-378 (QNEAFLRN). The segment at 361 to 508 (ATSDFIARNR…SKKMFQNEIN (148 aa)) is HEPN-like fold 1-I. Residues arginine 472 and histidine 477 each act as for target RNA cleavage in the active site. Positions 509 to 751 (EKKLKLKIFR…EFLREIKLGN (243 aa)) are helical-2. The segment at 519 to 522 (QLNS) is binds target RNA. The segment at 547–558 (NKNIPFVPSFTK) is binds crRNA spacer. The segment at 590–597 (DAQIYLLK) is binds target RNA. Residues 718-722 (KQEFD) form a binds crRNA spacer region. The segment at 752–813 (ILKYTERLNM…NLDNNRVTED (62 aa)) is HEPN-like fold 1-II. The interval 780-783 (SLEK) is binds crRNA repeat. The binds crRNA spacer and target RNA stretch occupies residues 804 to 810 (NLDNNRV). Positions 814 to 946 (FELEADEIGK…EYTHLKNKVE (133 aa)) are linker. Binds crRNA spacer stretches follow at residues 845–857 (KIYF…IKHR) and 938–942 (YTHLK). A coiled-coil region spans residues 880–946 (YKISIEELKK…EYTHLKNKVE (67 aa)). Positions 947–1159 (FNELNLLQGL…YKMEEKKSEN (213 aa)) are HEPN-like fold 2. Residues 962–963 (HR) are binds crRNA repeat. The interval 995–998 (FENK) is binds 3'-end of target RNA, in adjacent protein. Residues arginine 1048 and histidine 1053 each act as for target RNA cleavage in the active site. 2 binds crRNA processing site regions span residues 1072 to 1082 (RKLLSYDRKLK) and 1104 to 1108 (IGADK).

The protein belongs to the CRISPR-associated endoribonuclease Cas13a family. As to quaternary structure, crystals show the 3'-end of target RNA interacting with an adjacent protein molecule, and mutagenesis of those amino acid residues decreases target RNA cleavage, but it is not clear if this is physiological. It depends on a divalent metal cation as a cofactor.

Its activity is regulated as follows. Target RNA acts as an activator for non-specific ssRNA cleavage; the target RNA and complementary crRNA must both be at least 20 nucleotides long to activate the HEPN-like catalytic pocket for RNase activity. CRISPR (clustered regularly interspaced short palindromic repeat), is an adaptive immune system that provides protection against mobile genetic elements (viruses, transposable elements and conjugative plasmids). CRISPR clusters contain sequences complementary to antecedent mobile elements (spacer sequences) and target invading nucleic acids. Unlike many single-component effectors, this CRISPR-Cas system targets RNA. CRISPR clusters are transcribed from pre-CRISPR RNA (crRNA) and processed into crRNA by this protein. pre-crRNA processing yields a 5'-OH and probably a 2',3'-cyclic phosphate. Also cleaves pre-crRNA from several other type VI-A CRISPR systems. Cleaves linear target ssRNA in a crRNA-dependent fashion, preferentially before U residues. Cleavage of target ssRNA is about 80-fold faster than pre-crRNA processing and uses a different active site. Binding a viable target RNA target activates this protein for non-specific RNA degradation in vitro (called collateral RNA degradation). Activation occurs with 10 fM target RNA. crRNA maturation is not essential for activation of RNA degradation, but lack of mature crRNA (due to mutagenesis) decreases activation levels. This system has a 3' protospacer flanking site in the target RNA (PFS), which is C and unavailable to base pair with crRNA (PFS is equivalent to PAM, the protospacer adjacent motif). This is CRISPR-associated endoribonuclease Cas13a from Leptotrichia buccalis (strain ATCC 14201 / DSM 1135 / JCM 12969 / NCTC 10249 / C-1013-b).